The following is a 248-amino-acid chain: tRNA (guanine-N(1)-)-methyltransferase (248 aa).

Residues Gly113 and 133–138 (IGDFVL) contribute to the S-adenosyl-L-methionine site.

Belongs to the RNA methyltransferase TrmD family. As to quaternary structure, homodimer.

Its subcellular location is the cytoplasm. It catalyses the reaction guanosine(37) in tRNA + S-adenosyl-L-methionine = N(1)-methylguanosine(37) in tRNA + S-adenosyl-L-homocysteine + H(+). In terms of biological role, specifically methylates guanosine-37 in various tRNAs. This is tRNA (guanine-N(1)-)-methyltransferase from Dehalococcoides mccartyi (strain ATCC BAA-2266 / KCTC 15142 / 195) (Dehalococcoides ethenogenes (strain 195)).